Consider the following 515-residue polypeptide: ATP synthase subunit alpha (515 aa).

171 to 178 (GDRQTGKT) contributes to the ATP binding site.

The protein belongs to the ATPase alpha/beta chains family. F-type ATPases have 2 components, CF(1) - the catalytic core - and CF(0) - the membrane proton channel. CF(1) has five subunits: alpha(3), beta(3), gamma(1), delta(1), epsilon(1). CF(0) has three main subunits: a(1), b(2) and c(9-12). The alpha and beta chains form an alternating ring which encloses part of the gamma chain. CF(1) is attached to CF(0) by a central stalk formed by the gamma and epsilon chains, while a peripheral stalk is formed by the delta and b chains.

The protein resides in the cell inner membrane. It catalyses the reaction ATP + H2O + 4 H(+)(in) = ADP + phosphate + 5 H(+)(out). Functionally, produces ATP from ADP in the presence of a proton gradient across the membrane. The alpha chain is a regulatory subunit. The chain is ATP synthase subunit alpha from Coxiella burnetii (strain CbuK_Q154) (Coxiella burnetii (strain Q154)).